The primary structure comprises 713 residues: B3 domain-containing transcription factor VAL3 (713 aa).

Positions 328–427 (FEKILSATDT…KLILGFRKAS (100 aa)) form a DNA-binding region, TF-B3. Disordered stretches follow at residues 459 to 478 (VECS…SKRQ) and 616 to 713 (LNSD…TSSM). The segment covering 464–477 (GKKKSSMMITRSKR) has biased composition (basic residues). A compositionally biased stretch (polar residues) spans 616–629 (LNSDNGLHQSANNS). Basic and acidic residues predominate over residues 663-674 (TKSETLPHDDTV). Over residues 676 to 688 (SSFTSPSSSSAHS) the composition is skewed to low complexity. Positions 690 to 700 (NNKEDEGKLKT) are enriched in basic and acidic residues. Residues 701-713 (TTEIADTTTTSSM) show a composition bias toward low complexity.

It localises to the nucleus. May be involved in plant development. The polypeptide is B3 domain-containing transcription factor VAL3 (VAL3) (Arabidopsis thaliana (Mouse-ear cress)).